The following is a 222-amino-acid chain: MLITFEGIDGAGKSTQVAKLVAYLKQQSTPLLSLREPGGTPTAESIRSLLLDNRKSITPIAELLLFSASRAELVETLIRPALAEGKTVILDRFFDSTTAYQGHGRGISLEQLHSIIALSTGDLLPDVTFYLDLEPEEALRRAFSRSGLPLDFAAQSNESDRMEQAGIAFYHKVRNGYLTLMQQHPSRFVALDATQPPDTLHQHIIAEVETRLKLHISPLVAP.

Residue 7 to 14 coordinates ATP; the sequence is GIDGAGKS.

Belongs to the thymidylate kinase family.

It carries out the reaction dTMP + ATP = dTDP + ADP. In terms of biological role, phosphorylation of dTMP to form dTDP in both de novo and salvage pathways of dTTP synthesis. The chain is Thymidylate kinase from Chlorobium chlorochromatii (strain CaD3).